Consider the following 262-residue polypeptide: Nodulation protein J (262 aa).

The 227-residue stretch at 33–259 (ASLLGHLAEP…FLSTALLRRR (227 aa)) folds into the ABC transmembrane type-2 domain. Transmembrane regions (helical) follow at residues 35 to 55 (LLGH…GLGV), 60 to 80 (VGGV…SAMT), 125 to 145 (AALA…TQWL), 148 to 168 (LYAL…GMVV), 177 to 197 (YFIF…GAVF), and 231 to 251 (VVDV…PFFL).

Belongs to the ABC-2 integral membrane protein family. Lipooligosaccharide exporter (TC 3.A.1.102) subfamily. The complex is composed of two ATP-binding proteins (NodI) and two transmembrane proteins (NodJ).

Its subcellular location is the cell inner membrane. Functionally, part of the ABC transporter complex NodIJ involved in the export of the nodulation factors (Nod factors), the bacterial signal molecules that induce symbiosis and subsequent nodulation induction. Nod factors are LCO (lipo-chitin oligosaccharide), a modified beta-1,4-linked N-acetylglucosamine oligosaccharide. This subunit encodes the transporter. This chain is Nodulation protein J (nodJ), found in Rhizobium leguminosarum bv. trifolii.